The primary structure comprises 265 residues: tRNA (guanine-N(7)-)-methyltransferase (265 aa).

Residues 1 to 16 (MNHDDPNASGVPHDDA) are compositionally biased toward basic and acidic residues. The tract at residues 1–40 (MNHDDPNASGVPHDDANDAAPASASDAARATGHADDESSP) is disordered. Positions 18–31 (DAAPASASDAARAT) are enriched in low complexity. S-adenosyl-L-methionine is bound by residues E95, E120, D147, and D170. D170 is an active-site residue. Residues K174, D206, and 241–244 (TKFE) each bind substrate.

It belongs to the class I-like SAM-binding methyltransferase superfamily. TrmB family.

The enzyme catalyses guanosine(46) in tRNA + S-adenosyl-L-methionine = N(7)-methylguanosine(46) in tRNA + S-adenosyl-L-homocysteine. It functions in the pathway tRNA modification; N(7)-methylguanine-tRNA biosynthesis. Its function is as follows. Catalyzes the formation of N(7)-methylguanine at position 46 (m7G46) in tRNA. The chain is tRNA (guanine-N(7)-)-methyltransferase from Burkholderia thailandensis (strain ATCC 700388 / DSM 13276 / CCUG 48851 / CIP 106301 / E264).